Here is a 250-residue protein sequence, read N- to C-terminus: 5-oxoprolinase subunit A (250 aa).

This sequence belongs to the LamB/PxpA family. Forms a complex composed of PxpA, PxpB and PxpC.

It catalyses the reaction 5-oxo-L-proline + ATP + 2 H2O = L-glutamate + ADP + phosphate + H(+). In terms of biological role, catalyzes the cleavage of 5-oxoproline to form L-glutamate coupled to the hydrolysis of ATP to ADP and inorganic phosphate. In Nocardia farcinica (strain IFM 10152), this protein is 5-oxoprolinase subunit A.